The chain runs to 223 residues: Peptidyl-tRNA hydrolase (223 aa).

Y14 provides a ligand contact to tRNA. The active-site Proton acceptor is H19. TRNA-binding residues include Y64, N66, and N112. A disordered region spans residues 183-223; it reads MNVRNTRPKPGKRQKGEGDGSTDPAPAAKEGKGPLPPTQKP.

Belongs to the PTH family. Monomer.

Its subcellular location is the cytoplasm. The catalysed reaction is an N-acyl-L-alpha-aminoacyl-tRNA + H2O = an N-acyl-L-amino acid + a tRNA + H(+). Hydrolyzes ribosome-free peptidyl-tRNAs (with 1 or more amino acids incorporated), which drop off the ribosome during protein synthesis, or as a result of ribosome stalling. In terms of biological role, catalyzes the release of premature peptidyl moieties from peptidyl-tRNA molecules trapped in stalled 50S ribosomal subunits, and thus maintains levels of free tRNAs and 50S ribosomes. This is Peptidyl-tRNA hydrolase from Sorangium cellulosum (strain So ce56) (Polyangium cellulosum (strain So ce56)).